Reading from the N-terminus, the 268-residue chain is NH(3)-dependent NAD(+) synthetase (268 aa).

45 to 52 (GLSGGIDS) contacts ATP. Residue Asp-51 coordinates Mg(2+). Residue Arg-129 participates in deamido-NAD(+) binding. Thr-149 provides a ligand contact to ATP. A Mg(2+)-binding site is contributed by Glu-154. Residues Lys-162 and Asp-169 each coordinate deamido-NAD(+). ATP contacts are provided by Lys-178 and Thr-200. Position 260-261 (260-261 (HK)) interacts with deamido-NAD(+).

The protein belongs to the NAD synthetase family. As to quaternary structure, homodimer.

It catalyses the reaction deamido-NAD(+) + NH4(+) + ATP = AMP + diphosphate + NAD(+) + H(+). The protein operates within cofactor biosynthesis; NAD(+) biosynthesis; NAD(+) from deamido-NAD(+) (ammonia route): step 1/1. Catalyzes the ATP-dependent amidation of deamido-NAD to form NAD. Uses ammonia as a nitrogen source. The sequence is that of NH(3)-dependent NAD(+) synthetase from Halobacterium salinarum (strain ATCC 29341 / DSM 671 / R1).